Reading from the N-terminus, the 536-residue chain is Probable cytochrome P450 12a5, mitochondrial (536 aa).

Position 482 (cysteine 482) interacts with heme.

Belongs to the cytochrome P450 family. The cofactor is heme.

The protein resides in the mitochondrion membrane. The protein is Probable cytochrome P450 12a5, mitochondrial (Cyp12a5) of Drosophila melanogaster (Fruit fly).